The chain runs to 200 residues: Probable nicotinate-nucleotide adenylyltransferase (200 aa).

Belongs to the NadD family.

The catalysed reaction is nicotinate beta-D-ribonucleotide + ATP + H(+) = deamido-NAD(+) + diphosphate. It participates in cofactor biosynthesis; NAD(+) biosynthesis; deamido-NAD(+) from nicotinate D-ribonucleotide: step 1/1. Functionally, catalyzes the reversible adenylation of nicotinate mononucleotide (NaMN) to nicotinic acid adenine dinucleotide (NaAD). The polypeptide is Probable nicotinate-nucleotide adenylyltransferase (Clostridium novyi (strain NT)).